The chain runs to 482 residues: Anaerobic nitric oxide reductase flavorubredoxin (482 aa).

The zinc metallo-hydrolase stretch occupies residues 30–210 (LRGSSYNSYL…PFSRLVTPKI (181 aa)). The Fe cation site is built by histidine 79, glutamate 81, aspartate 83, histidine 147, aspartate 166, and histidine 227. The Flavodoxin-like domain maps to 254–393 (ITIFYDTMSN…LCRQHGRDIA (140 aa)). FMN contacts are provided by residues 260-264 (TMSNN) and 342-369 (AFGS…EMSL). The Rubredoxin-like domain maps to 426-477 (GPMMQCSVCQWVYDPAKGEPNQDVQPGTPWSEVPDNFLCPECSLGKDVFDVL). 4 residues coordinate Fe cation: cysteine 431, cysteine 434, cysteine 464, and cysteine 467.

It in the N-terminal section; belongs to the zinc metallo-hydrolase group 3 family. Homotetramer. Requires Fe cation as cofactor. The cofactor is FMN.

The protein localises to the cytoplasm. Its pathway is nitrogen metabolism; nitric oxide reduction. Functionally, anaerobic nitric oxide reductase; uses NADH to detoxify nitric oxide (NO), protecting several 4Fe-4S NO-sensitive enzymes. Has at least 2 reductase partners, only one of which (NorW, flavorubredoxin reductase) has been identified. NO probably binds to the di-iron center; electrons enter from the NorW at rubredoxin and are transferred sequentially to the FMN center and the di-iron center. Also able to function as an aerobic oxygen reductase. The chain is Anaerobic nitric oxide reductase flavorubredoxin from Klebsiella pneumoniae subsp. pneumoniae (strain ATCC 700721 / MGH 78578).